The primary structure comprises 41 residues: uncharacterized protein (41 aa).

The segment at Asn19–Leu41 is disordered.

This is an uncharacterized protein from Dictyostelium discoideum (Social amoeba).